Here is a 332-residue protein sequence, read N- to C-terminus: DNA-directed RNA polymerase subunit alpha (332 aa).

The alpha N-terminal domain (alpha-NTD) stretch occupies residues Met1–Glu231. The segment at Leu262 to Asn332 is alpha C-terminal domain (alpha-CTD).

Belongs to the RNA polymerase alpha chain family. As to quaternary structure, in plastids the minimal PEP RNA polymerase catalytic core is composed of four subunits: alpha, beta, beta', and beta''. When a (nuclear-encoded) sigma factor is associated with the core the holoenzyme is formed, which can initiate transcription.

Its subcellular location is the plastid. It carries out the reaction RNA(n) + a ribonucleoside 5'-triphosphate = RNA(n+1) + diphosphate. In terms of biological role, DNA-dependent RNA polymerase catalyzes the transcription of DNA into RNA using the four ribonucleoside triphosphates as substrates. This Cuscuta japonica (Japanese dodder) protein is DNA-directed RNA polymerase subunit alpha.